Consider the following 203-residue polypeptide: RNA annealing protein YRA2 (203 aa).

The residue at position 1 (Met-1) is an N-acetylmethionine. 2 disordered regions span residues Met-1 to Pro-60 and Glu-134 to Gly-203. Polar residues predominate over residues Asn-11–His-20. A compositionally biased stretch (basic and acidic residues) spans Ser-47 to Pro-60. Positions Lys-64–Pro-138 constitute an RRM domain. 2 stretches are compositionally biased toward basic residues: residues Gln-139 to Gln-153 and Pro-163 to Gly-180.

The protein belongs to the YRA1 family. In terms of assembly, associates with mRNPs. Interacts with YRA1.

It is found in the nucleus. Involved in export of poly(A) mRNAs from the nucleus. Recruited to the coding sequences as well as poly-A sites of active genes. In Saccharomyces cerevisiae (strain RM11-1a) (Baker's yeast), this protein is RNA annealing protein YRA2 (YRA2).